Here is an 88-residue protein sequence, read N- to C-terminus: PTS system cellobiose-specific EIIB component (88 aa).

A PTS EIIB type-3 domain is found at 3–88 (KKRIYLFCSA…IDTLLYGKVD (86 aa)). Cysteine 10 serves as the catalytic Phosphocysteine intermediate. Cysteine 10 bears the Phosphocysteine; by EIIA mark.

It is found in the cytoplasm. The catalysed reaction is D-cellobiose(out) + N(pros)-phospho-L-histidyl-[protein] = 6-phospho-beta-D-glucosyl-(1-&gt;4)-D-glucose(in) + L-histidyl-[protein]. Its function is as follows. The phosphoenolpyruvate-dependent sugar phosphotransferase system (sugar PTS), a major carbohydrate active transport system, catalyzes the phosphorylation of incoming sugar substrates concomitantly with their translocation across the cell membrane. The enzyme II CelABD PTS system is involved in cellobiose transport. The chain is PTS system cellobiose-specific EIIB component from Aeromonas hydrophila.